Consider the following 597-residue polypeptide: MNASIPAITTGPLPASSKVHVQGTLHDIKVPMRQIEISDECPLNVYDSSGPYTDTAISIDIAKGLADSRGIWLRSRGDVEEYDGRTITAVDNGFAEGERLTPAFPNQRRPLRAVGDRAVTQMAYARAGIITPEMEFVAIRENIGRTQALKEERDGEDFGASIPDFVTPEFVRQEIASGRAIIPANINHRELEPMIIGRNFLVKINANIGNSAVTSSMEEEVEKMVWSIRWGADTVMDLSTGRNIHNIRDWIIRNAPVPIGTVPLYQALEKVGGIAEDLTWEIFRDTLIEQAEQGVDYFTIHAGVRLHMIPLTARRVTGIVSRGGSIMAKWCLHHHRESFLYEHFEEICDICRRYDVSFSLGDGLRPGSIADANDAAQFAELETLGELTKIAWAKDCQVMIEGPGHVPMHKIKTNMDKQLEHCHEAPFYTLGPLTTDIAPGYDHITSAIGAAMIGWFGTAMLCYVTPKEHLGLPDRNDVKTGVITYKLAAHAADLAKGHPGAQMRDDALSRARFEFRWEDQFNLGLDPDTARAMHDETLPKQAHKVSHFCSMCGPKFCSMKISHDIRAAAEKQDGMEQMAEKFREGGQLYVPVTEPAE.

Substrate contacts are provided by residues asparagine 207, methionine 236, tyrosine 265, histidine 301, 321 to 323, 362 to 365, and glutamate 401; these read SRG and DGLR. Histidine 405 is a Zn(2+) binding site. Substrate is bound at residue tyrosine 428. Residue histidine 469 coordinates Zn(2+). Residues cysteine 549, cysteine 552, and cysteine 557 each contribute to the [4Fe-4S] cluster site.

Belongs to the ThiC family. Homodimer. [4Fe-4S] cluster serves as cofactor.

It catalyses the reaction 5-amino-1-(5-phospho-beta-D-ribosyl)imidazole + S-adenosyl-L-methionine = 4-amino-2-methyl-5-(phosphooxymethyl)pyrimidine + CO + 5'-deoxyadenosine + formate + L-methionine + 3 H(+). Its pathway is cofactor biosynthesis; thiamine diphosphate biosynthesis. In terms of biological role, catalyzes the synthesis of the hydroxymethylpyrimidine phosphate (HMP-P) moiety of thiamine from aminoimidazole ribotide (AIR) in a radical S-adenosyl-L-methionine (SAM)-dependent reaction. The protein is Phosphomethylpyrimidine synthase of Gluconobacter oxydans (strain 621H) (Gluconobacter suboxydans).